Consider the following 144-residue polypeptide: Large ribosomal subunit protein uL11 (144 aa).

It belongs to the universal ribosomal protein uL11 family. In terms of assembly, part of the ribosomal stalk of the 50S ribosomal subunit. Interacts with L10 and the large rRNA to form the base of the stalk. L10 forms an elongated spine to which L12 dimers bind in a sequential fashion forming a multimeric L10(L12)X complex. Post-translationally, one or more lysine residues are methylated.

Forms part of the ribosomal stalk which helps the ribosome interact with GTP-bound translation factors. This is Large ribosomal subunit protein uL11 from Rickettsia bellii (strain OSU 85-389).